We begin with the raw amino-acid sequence, 425 residues long: Imidazolonepropionase (425 aa).

Residues H78 and H80 each contribute to the Fe(3+) site. The Zn(2+) site is built by H78 and H80. The 4-imidazolone-5-propanoate site is built by R87, Y150, and H183. Residue Y150 participates in N-formimidoyl-L-glutamate binding. Fe(3+) is bound at residue H248. H248 serves as a coordination point for Zn(2+). A 4-imidazolone-5-propanoate-binding site is contributed by Q251. D323 is a binding site for Fe(3+). D323 contacts Zn(2+). N-formimidoyl-L-glutamate contacts are provided by N325 and G327. T328 contacts 4-imidazolone-5-propanoate.

It belongs to the metallo-dependent hydrolases superfamily. HutI family. Zn(2+) serves as cofactor. Fe(3+) is required as a cofactor.

The protein localises to the cytoplasm. It carries out the reaction 4-imidazolone-5-propanoate + H2O = N-formimidoyl-L-glutamate. It functions in the pathway amino-acid degradation; L-histidine degradation into L-glutamate; N-formimidoyl-L-glutamate from L-histidine: step 3/3. Its function is as follows. Catalyzes the hydrolytic cleavage of the carbon-nitrogen bond in imidazolone-5-propanoate to yield N-formimidoyl-L-glutamate. It is the third step in the universal histidine degradation pathway. This Polaromonas sp. (strain JS666 / ATCC BAA-500) protein is Imidazolonepropionase.